The following is a 644-amino-acid chain: Fructose-1,6-bisphosphatase class 3 (644 aa).

This sequence belongs to the FBPase class 3 family. Mn(2+) is required as a cofactor.

The catalysed reaction is beta-D-fructose 1,6-bisphosphate + H2O = beta-D-fructose 6-phosphate + phosphate. Its pathway is carbohydrate biosynthesis; gluconeogenesis. This chain is Fructose-1,6-bisphosphatase class 3, found in Oceanobacillus iheyensis (strain DSM 14371 / CIP 107618 / JCM 11309 / KCTC 3954 / HTE831).